A 270-amino-acid polypeptide reads, in one-letter code: Small ribosomal subunit protein uS3 (270 aa).

In terms of domain architecture, KH type-2 spans 38–106; the sequence is IRQMLTRGME…QVQLNILEVK (69 aa). A disordered region spans residues 212–270; the sequence is EREAAQAAQRAAGPQRRERPGRRRRGGGGGGGQQQQQAEKATAQATEAAKAAKSGNEGS. Composition is skewed to low complexity over residues 216 to 225 and 245 to 263; these read AQAAQRAAGP and QQQQ…AKAA.

The protein belongs to the universal ribosomal protein uS3 family. In terms of assembly, part of the 30S ribosomal subunit. Forms a tight complex with proteins S10 and S14.

Functionally, binds the lower part of the 30S subunit head. Binds mRNA in the 70S ribosome, positioning it for translation. This is Small ribosomal subunit protein uS3 from Thermobifida fusca (strain YX).